The chain runs to 555 residues: 2-isopropylmalate synthase (555 aa).

A Pyruvate carboxyltransferase domain is found at 30–303; the sequence is PIWCSVDLRD…DPGLDCTDIN (274 aa). Mg(2+) is bound by residues D39, H242, H244, and N278. A regulatory domain region spans residues 437–555; that stretch reads QPDARIKFVD…VSAANRVIAK (119 aa).

It belongs to the alpha-IPM synthase/homocitrate synthase family. LeuA type 2 subfamily. In terms of assembly, homodimer. Mg(2+) serves as cofactor.

Its subcellular location is the cytoplasm. It catalyses the reaction 3-methyl-2-oxobutanoate + acetyl-CoA + H2O = (2S)-2-isopropylmalate + CoA + H(+). It functions in the pathway amino-acid biosynthesis; L-leucine biosynthesis; L-leucine from 3-methyl-2-oxobutanoate: step 1/4. In terms of biological role, catalyzes the condensation of the acetyl group of acetyl-CoA with 3-methyl-2-oxobutanoate (2-ketoisovalerate) to form 3-carboxy-3-hydroxy-4-methylpentanoate (2-isopropylmalate). This is 2-isopropylmalate synthase from Brucella melitensis biotype 1 (strain ATCC 23456 / CCUG 17765 / NCTC 10094 / 16M).